The primary structure comprises 668 residues: DNA ligase (668 aa).

Residues 37-41 (DAVYD), 86-87 (SM), and glutamate 116 each bind NAD(+). Residue lysine 118 is the N6-AMP-lysine intermediate of the active site. Positions 139, 173, 288, and 312 each coordinate NAD(+). Zn(2+)-binding residues include cysteine 406, cysteine 409, cysteine 424, and cysteine 429. One can recognise a BRCT domain in the interval 590 to 668 (APDNFFKEKT…EQEAIAKIEK (79 aa)).

The protein belongs to the NAD-dependent DNA ligase family. LigA subfamily. Requires Mg(2+) as cofactor. It depends on Mn(2+) as a cofactor.

It carries out the reaction NAD(+) + (deoxyribonucleotide)n-3'-hydroxyl + 5'-phospho-(deoxyribonucleotide)m = (deoxyribonucleotide)n+m + AMP + beta-nicotinamide D-nucleotide.. Its function is as follows. DNA ligase that catalyzes the formation of phosphodiester linkages between 5'-phosphoryl and 3'-hydroxyl groups in double-stranded DNA using NAD as a coenzyme and as the energy source for the reaction. It is essential for DNA replication and repair of damaged DNA. The protein is DNA ligase of Lactobacillus gasseri (strain ATCC 33323 / DSM 20243 / BCRC 14619 / CIP 102991 / JCM 1131 / KCTC 3163 / NCIMB 11718 / NCTC 13722 / AM63).